A 186-amino-acid chain; its full sequence is CoB--CoM heterodisulfide reductase iron-sulfur subunit C 2 (186 aa).

2 consecutive 4Fe-4S ferredoxin-type domains span residues 26-56 (GEDIVKSIKACYQCGTCTGSCPSGRRTAYRT) and 67-99 (LDDVLDSDDIWYCTTCYTCYERCPRDVKITEII). Residues Cys36, Cys39, Cys42, Cys46, Cys79, Cys82, Cys85, and Cys89 each coordinate [4Fe-4S] cluster.

This sequence belongs to the HdrC family. The heterodisulfide reductase is composed of three subunits; HdrA, HdrB and HdrC. [4Fe-4S] cluster is required as a cofactor.

It functions in the pathway cofactor metabolism; coenzyme M-coenzyme B heterodisulfide reduction; coenzyme B and coenzyme M from coenzyme M-coenzyme B heterodisulfide: step 1/1. In terms of biological role, part of a complex that catalyzes the reversible reduction of CoM-S-S-CoB to the thiol-coenzymes H-S-CoM (coenzyme M) and H-S-CoB (coenzyme B). This Methanocaldococcus jannaschii (strain ATCC 43067 / DSM 2661 / JAL-1 / JCM 10045 / NBRC 100440) (Methanococcus jannaschii) protein is CoB--CoM heterodisulfide reductase iron-sulfur subunit C 2 (hdrC2).